The following is a 1486-amino-acid chain: Chromosome partition protein MukB (1486 aa).

Gly34–Ser41 contributes to the ATP binding site. Coiled coils occupy residues Leu326–Gln418, Leu444–Gln480, and Arg509–Val603. Residues Pro666 to Arg783 are flexible hinge. 3 coiled-coil regions span residues Glu835–Glu923, Glu977–Ala1115, and Val1209–Ser1266.

The protein belongs to the SMC family. MukB subfamily. Homodimerization via its hinge domain. Binds to DNA via its C-terminal region. Interacts, and probably forms a ternary complex, with MukE and MukF via its C-terminal region. The complex formation is stimulated by calcium or magnesium. Interacts with tubulin-related protein FtsZ.

The protein resides in the cytoplasm. It localises to the nucleoid. Its function is as follows. Plays a central role in chromosome condensation, segregation and cell cycle progression. Functions as a homodimer, which is essential for chromosome partition. Involved in negative DNA supercoiling in vivo, and by this means organize and compact chromosomes. May achieve or facilitate chromosome segregation by condensation DNA from both sides of a centrally located replisome during cell division. This chain is Chromosome partition protein MukB, found in Shigella flexneri serotype 5b (strain 8401).